Reading from the N-terminus, the 94-residue chain is Large ribosomal subunit protein eL42 (94 aa).

Positions 11, 14, 71, and 74 each coordinate Zn(2+). The C4-type zinc-finger motif lies at Cys-11–Cys-74.

Belongs to the eukaryotic ribosomal protein eL42 family. In terms of assembly, part of the 50S ribosomal subunit. Requires Zn(2+) as cofactor.

Functionally, binds to the 23S rRNA. The chain is Large ribosomal subunit protein eL42 from Pyrococcus horikoshii (strain ATCC 700860 / DSM 12428 / JCM 9974 / NBRC 100139 / OT-3).